A 216-amino-acid polypeptide reads, in one-letter code: Phosphatidylserine decarboxylase proenzyme (216 aa).

Residue S183 is the Schiff-base intermediate with substrate; via pyruvic acid of the active site. S183 carries the pyruvic acid (Ser); by autocatalysis modification.

It belongs to the phosphatidylserine decarboxylase family. PSD-A subfamily. Heterodimer of a large membrane-associated beta subunit and a small pyruvoyl-containing alpha subunit. The cofactor is pyruvate. In terms of processing, is synthesized initially as an inactive proenzyme. Formation of the active enzyme involves a self-maturation process in which the active site pyruvoyl group is generated from an internal serine residue via an autocatalytic post-translational modification. Two non-identical subunits are generated from the proenzyme in this reaction, and the pyruvate is formed at the N-terminus of the alpha chain, which is derived from the carboxyl end of the proenzyme. The post-translation cleavage follows an unusual pathway, termed non-hydrolytic serinolysis, in which the side chain hydroxyl group of the serine supplies its oxygen atom to form the C-terminus of the beta chain, while the remainder of the serine residue undergoes an oxidative deamination to produce ammonia and the pyruvoyl prosthetic group on the alpha chain.

It localises to the cell membrane. The catalysed reaction is a 1,2-diacyl-sn-glycero-3-phospho-L-serine + H(+) = a 1,2-diacyl-sn-glycero-3-phosphoethanolamine + CO2. It participates in phospholipid metabolism; phosphatidylethanolamine biosynthesis; phosphatidylethanolamine from CDP-diacylglycerol: step 2/2. Functionally, catalyzes the formation of phosphatidylethanolamine (PtdEtn) from phosphatidylserine (PtdSer). In Chlorobaculum tepidum (strain ATCC 49652 / DSM 12025 / NBRC 103806 / TLS) (Chlorobium tepidum), this protein is Phosphatidylserine decarboxylase proenzyme.